Reading from the N-terminus, the 233-residue chain is MIEHLGINTPYFGILVSLIPFVIATYFYKKTNGFFLLAPLFVSMVAGIAFLKLTGISYENYKIGGDIINFFLEPATICFAIPLYRKREVLKRYWLQIFGGIAVGTIIALLLIYLVAITFQFGNQIIASMLPQAATTAIALPVSDGIGGVKELTSLAVILNAVVISALGAKIVKLFKISNPIARGLALGTSGHTLGVAAAKELGETEESMGSIAVVIVGVIVVAVVPILAPILL.

The next 6 membrane-spanning stretches (helical) occupy residues 5–25 (LGIN…VIAT), 33–53 (GFFL…FLKL), 63–83 (IGGD…AIPL), 97–117 (IFGG…LVAI), 152–172 (LTSL…AKIV), and 212–232 (IAVV…APIL).

The protein belongs to the CidB/LrgB family. LrgB subfamily.

The protein localises to the cell membrane. Its function is as follows. Inhibits the expression or activity of extracellular murein hydrolases by interacting, possibly with LrgA, with the holin-like proteins CidA and/or CidB. The LrgAB and CidAB proteins may affect the proton motive force of the membrane. May be involved in programmed cell death (PCD), possibly triggering PCD in response to antibiotics and environmental stresses. This Staphylococcus epidermidis (strain ATCC 12228 / FDA PCI 1200) protein is Antiholin-like protein LrgB.